The primary structure comprises 198 residues: NAD(P)H dehydrogenase (quinone) (198 aa).

Residues 4–189 (ILVLYYSMYG…SIARYQGEYV (186 aa)) enclose the Flavodoxin-like domain. FMN is bound by residues 10 to 15 (SMYGHI) and 78 to 80 (TRF). Residue Tyr12 coordinates NAD(+). Trp98 contributes to the substrate binding site. FMN is bound by residues 113 to 118 (STGTGG) and His133.

It belongs to the WrbA family. FMN is required as a cofactor.

The catalysed reaction is a quinone + NADH + H(+) = a quinol + NAD(+). The enzyme catalyses a quinone + NADPH + H(+) = a quinol + NADP(+). The chain is NAD(P)H dehydrogenase (quinone) from Salmonella agona (strain SL483).